A 330-amino-acid polypeptide reads, in one-letter code: Aspartate--ammonia ligase (330 aa).

The protein belongs to the class-II aminoacyl-tRNA synthetase family. AsnA subfamily.

It is found in the cytoplasm. The enzyme catalyses L-aspartate + NH4(+) + ATP = L-asparagine + AMP + diphosphate + H(+). Its pathway is amino-acid biosynthesis; L-asparagine biosynthesis; L-asparagine from L-aspartate (ammonia route): step 1/1. This is Aspartate--ammonia ligase from Escherichia coli O127:H6 (strain E2348/69 / EPEC).